A 229-amino-acid chain; its full sequence is Cytidylate kinase (229 aa).

10-18 serves as a coordination point for ATP; that stretch reads GPAGSGKST.

This sequence belongs to the cytidylate kinase family. Type 1 subfamily.

The protein resides in the cytoplasm. It catalyses the reaction CMP + ATP = CDP + ADP. It carries out the reaction dCMP + ATP = dCDP + ADP. This Leptospira interrogans serogroup Icterohaemorrhagiae serovar Lai (strain 56601) protein is Cytidylate kinase.